We begin with the raw amino-acid sequence, 850 residues long: Mitochondrial escape protein 2 (850 aa).

The transit peptide at 1-44 (MLLVRTTSLNVSRMPVPCLARGIGILKGKYRLANLMNAQPSVRH) directs the protein to the mitochondrion. Residues 44–66 (HVSSEIQQKDQQAGESNTATDTG) are disordered. Over 45–287 (VSSEIQQKDQ…VSNFFTNHTR (243 aa)) the chain is Mitochondrial matrix. Over residues 47–64 (SEIQQKDQQAGESNTATD) the composition is skewed to polar residues. The region spanning 198–272 (TTIVIKFQGP…TVLHIQYENI (75 aa)) is the RRM domain. Residues 288–308 (IAIPVLFALLSIFAVLVFDPI) traverse the membrane as a helical segment. The Mitochondrial intermembrane segment spans residues 309-850 (REFSIEQKIT…CEEEIKNLSK (542 aa)). Residues 607-621 (KGENVKEPESEKEIA) show a composition bias toward basic and acidic residues. The tract at residues 607–633 (KGENVKEPESEKEIAENNDSDSEADTS) is disordered.

Belongs to the YME2 family.

The protein resides in the mitochondrion inner membrane. Functionally, plays a role in maintaining the mitochondrial genome and in controlling the mtDNA escape. Involved in the regulation of mtDNA nucleotide structure and number. May have a dispensable role in early maturation of pre-rRNA. The chain is Mitochondrial escape protein 2 (YME2) from Saccharomyces cerevisiae (strain YJM789) (Baker's yeast).